A 102-amino-acid polypeptide reads, in one-letter code: NADH-quinone oxidoreductase subunit K (102 aa).

The next 3 membrane-spanning stretches (helical) occupy residues 4 to 24 (IGLN…LVGV), 31 to 51 (LMLF…FAAI), and 65 to 85 (FFVI…LIVW).

This sequence belongs to the complex I subunit 4L family. In terms of assembly, NDH-1 is composed of 14 different subunits. Subunits NuoA, H, J, K, L, M, N constitute the membrane sector of the complex.

The protein localises to the cell inner membrane. The catalysed reaction is a quinone + NADH + 5 H(+)(in) = a quinol + NAD(+) + 4 H(+)(out). Its function is as follows. NDH-1 shuttles electrons from NADH, via FMN and iron-sulfur (Fe-S) centers, to quinones in the respiratory chain. The immediate electron acceptor for the enzyme in this species is believed to be ubiquinone. Couples the redox reaction to proton translocation (for every two electrons transferred, four hydrogen ions are translocated across the cytoplasmic membrane), and thus conserves the redox energy in a proton gradient. This chain is NADH-quinone oxidoreductase subunit K, found in Sulfurimonas denitrificans (strain ATCC 33889 / DSM 1251) (Thiomicrospira denitrificans (strain ATCC 33889 / DSM 1251)).